The chain runs to 201 residues: Putative lipoprotein Hmuk_2215 (201 aa).

The first 22 residues, 1-22 (MCPRPRRAVLLGLGVAMSAIAG), serve as a signal peptide directing secretion. N-acetylcysteine is present on cysteine 23. Cysteine 23 carries S-archaeol cysteine lipidation. Disordered regions lie at residues 25–78 (ETAP…ETSE) and 182–201 (ATRAVQQGPEPAEFDDGDCP). Residues 69 to 78 (TRADETETSE) are compositionally biased toward basic and acidic residues.

It localises to the cell membrane. This chain is Putative lipoprotein Hmuk_2215, found in Halomicrobium mukohataei (strain ATCC 700874 / DSM 12286 / JCM 9738 / NCIMB 13541) (Haloarcula mukohataei).